The primary structure comprises 430 residues: Formate-dependent phosphoribosylglycinamide formyltransferase (430 aa).

Residues 26-27 (EL) and Glu86 each bind N(1)-(5-phospho-beta-D-ribosyl)glycinamide. ATP is bound by residues Arg118, Lys159, 199–202 (EEHI), and Glu207. In terms of domain architecture, ATP-grasp spans 123 to 319 (ETLVKEAKVP…EFALHLRAVL (197 aa)). Mg(2+) is bound by residues Glu276 and Glu288. Residues Asp295, Lys375, and 382–383 (RR) each bind N(1)-(5-phospho-beta-D-ribosyl)glycinamide.

The protein belongs to the PurK/PurT family. Homodimer.

The enzyme catalyses N(1)-(5-phospho-beta-D-ribosyl)glycinamide + formate + ATP = N(2)-formyl-N(1)-(5-phospho-beta-D-ribosyl)glycinamide + ADP + phosphate + H(+). Its pathway is purine metabolism; IMP biosynthesis via de novo pathway; N(2)-formyl-N(1)-(5-phospho-D-ribosyl)glycinamide from N(1)-(5-phospho-D-ribosyl)glycinamide (formate route): step 1/1. Functionally, involved in the de novo purine biosynthesis. Catalyzes the transfer of formate to 5-phospho-ribosyl-glycinamide (GAR), producing 5-phospho-ribosyl-N-formylglycinamide (FGAR). Formate is provided by PurU via hydrolysis of 10-formyl-tetrahydrofolate. This is Formate-dependent phosphoribosylglycinamide formyltransferase from Pyrococcus horikoshii (strain ATCC 700860 / DSM 12428 / JCM 9974 / NBRC 100139 / OT-3).